We begin with the raw amino-acid sequence, 463 residues long: Phosphomethylpyrimidine synthase (463 aa).

Substrate contacts are provided by residues N80, M109, Y138, H173, S193 to G195, D234 to R237, and E273. H277 contributes to the Zn(2+) binding site. Y300 contributes to the substrate binding site. Residue H341 coordinates Zn(2+). [4Fe-4S] cluster-binding residues include C421, C424, and C429.

This sequence belongs to the ThiC family. Homodimer. Requires [4Fe-4S] cluster as cofactor.

It catalyses the reaction 5-amino-1-(5-phospho-beta-D-ribosyl)imidazole + S-adenosyl-L-methionine = 4-amino-2-methyl-5-(phosphooxymethyl)pyrimidine + CO + 5'-deoxyadenosine + formate + L-methionine + 3 H(+). It participates in cofactor biosynthesis; thiamine diphosphate biosynthesis. In terms of biological role, catalyzes the synthesis of the hydroxymethylpyrimidine phosphate (HMP-P) moiety of thiamine from aminoimidazole ribotide (AIR) in a radical S-adenosyl-L-methionine (SAM)-dependent reaction. The protein is Phosphomethylpyrimidine synthase of Anaeromyxobacter dehalogenans (strain 2CP-1 / ATCC BAA-258).